A 493-amino-acid polypeptide reads, in one-letter code: Cysteine--tRNA ligase (493 aa).

Cys-29 provides a ligand contact to Zn(2+). The 'HIGH' region motif lies at 31 to 41 (ATVQSEPHIGH). Zn(2+) contacts are provided by Cys-214, His-239, and Glu-243. Positions 270–274 (KMSKS) match the 'KMSKS' region motif. Residue Lys-273 participates in ATP binding.

Belongs to the class-I aminoacyl-tRNA synthetase family. As to quaternary structure, monomer. Requires Zn(2+) as cofactor.

The protein localises to the cytoplasm. It carries out the reaction tRNA(Cys) + L-cysteine + ATP = L-cysteinyl-tRNA(Cys) + AMP + diphosphate. This Renibacterium salmoninarum (strain ATCC 33209 / DSM 20767 / JCM 11484 / NBRC 15589 / NCIMB 2235) protein is Cysteine--tRNA ligase.